The chain runs to 448 residues: JmjC domain-containing protein D (448 aa).

A JmjC domain is found at 305 to 448 (EQIPQLRNDI…SLSQSFSIFP (144 aa)).

The protein is JmjC domain-containing protein D (jcdD) of Dictyostelium discoideum (Social amoeba).